The sequence spans 565 residues: Receptor-like serine/threonine-protein kinase NCRK (565 aa).

The signal sequence occupies residues 1-23; it reads MKMRVETALAILLVLISIQQCYG. At 24 to 103 the chain is on the extracellular side; that stretch reads GVSNYTCTCF…SKKQYLSRKL (80 aa). 5 N-linked (GlcNAc...) asparagine glycosylation sites follow: Asn-27, Asn-37, Asn-45, Asn-77, and Asn-85. Residues 104-124 traverse the membrane as a helical segment; it reads VIVILLFCGVLISLAFLASMI. Residues 125–565 lie on the Cytoplasmic side of the membrane; the sequence is CYICRKDKFS…PVLLEPSAHI (441 aa). Residues 210–495 enclose the Protein kinase domain; the sequence is FSSNSVIGHG…REVVQILSTI (286 aa). Residues 216 to 224 and Lys-238 contribute to the ATP site; that span reads IGHGGSSCV. Asp-339 (proton acceptor) is an active-site residue. 2 positions are modified to phosphothreonine: Thr-378 and Thr-383. Tyr-391 bears the Phosphotyrosine mark.

The protein belongs to the protein kinase superfamily. Ser/Thr protein kinase family. As to quaternary structure, interacts with ARAC5. Post-translationally, phosphorylated. Mostly expressed in leaf primordia, root and shoot apical meristems, lateral root primordia, and stele of older roots and hypocotyls. In leaves and cotyledons, highest levels observed in trichomes, vasculatures, and hydathode endothem.

Its subcellular location is the cell membrane. It is found in the prevacuolar compartment membrane. The protein localises to the endosome. The enzyme catalyses L-seryl-[protein] + ATP = O-phospho-L-seryl-[protein] + ADP + H(+). It carries out the reaction L-threonyl-[protein] + ATP = O-phospho-L-threonyl-[protein] + ADP + H(+). The chain is Receptor-like serine/threonine-protein kinase NCRK (NCRK) from Arabidopsis thaliana (Mouse-ear cress).